Reading from the N-terminus, the 96-residue chain is Pro-glucagon (96 aa).

Basic and acidic residues-rich tracts occupy residues Leu-1–Ala-12 and Glu-19–Ser-30. The tract at residues Leu-1–Ser-35 is disordered.

It belongs to the glucagon family.

The protein localises to the secreted. In terms of biological role, plays a key role in glucose metabolism and homeostasis. Regulates blood glucose by increasing gluconeogenesis and decreasing glycolysis. This is Pro-glucagon (gcg) from Myoxocephalus scorpius (Shorthorn sculpin).